Consider the following 201-residue polypeptide: Imidazole glycerol phosphate synthase subunit HisH (201 aa).

A Glutamine amidotransferase type-1 domain is found at 2-201 (KVVILDTGCA…ARLLKNFLEM (200 aa)). The active-site Nucleophile is cysteine 77. Residues histidine 183 and glutamate 185 contribute to the active site.

As to quaternary structure, heterodimer of HisH and HisF.

It is found in the cytoplasm. It carries out the reaction 5-[(5-phospho-1-deoxy-D-ribulos-1-ylimino)methylamino]-1-(5-phospho-beta-D-ribosyl)imidazole-4-carboxamide + L-glutamine = D-erythro-1-(imidazol-4-yl)glycerol 3-phosphate + 5-amino-1-(5-phospho-beta-D-ribosyl)imidazole-4-carboxamide + L-glutamate + H(+). The catalysed reaction is L-glutamine + H2O = L-glutamate + NH4(+). Its pathway is amino-acid biosynthesis; L-histidine biosynthesis; L-histidine from 5-phospho-alpha-D-ribose 1-diphosphate: step 5/9. Functionally, IGPS catalyzes the conversion of PRFAR and glutamine to IGP, AICAR and glutamate. The HisH subunit catalyzes the hydrolysis of glutamine to glutamate and ammonia as part of the synthesis of IGP and AICAR. The resulting ammonia molecule is channeled to the active site of HisF. This is Imidazole glycerol phosphate synthase subunit HisH from Photorhabdus laumondii subsp. laumondii (strain DSM 15139 / CIP 105565 / TT01) (Photorhabdus luminescens subsp. laumondii).